Here is a 281-residue protein sequence, read N- to C-terminus: Undecaprenyl-diphosphatase (281 aa).

The next 7 membrane-spanning stretches (helical) occupy residues 45–65 (AFTN…VVVI), 86–106 (WQLW…GLIF), 114–134 (FQNF…FIYV), 148–168 (LVSL…LSLI), 196–216 (FFLG…KFIV), 224–244 (SQLF…LYVI), and 256–276 (FTFF…YGLM).

The protein belongs to the UppP family.

It localises to the cell membrane. The catalysed reaction is di-trans,octa-cis-undecaprenyl diphosphate + H2O = di-trans,octa-cis-undecaprenyl phosphate + phosphate + H(+). In terms of biological role, catalyzes the dephosphorylation of undecaprenyl diphosphate (UPP). Confers resistance to bacitracin. The polypeptide is Undecaprenyl-diphosphatase (Streptococcus mutans serotype c (strain ATCC 700610 / UA159)).